A 309-amino-acid polypeptide reads, in one-letter code: Phytoene synthase (309 aa).

The protein belongs to the phytoene/squalene synthase family.

It catalyses the reaction 2 (2E,6E,10E)-geranylgeranyl diphosphate = 15-cis-phytoene + 2 diphosphate. Its pathway is carotenoid biosynthesis; phytoene biosynthesis; all-trans-phytoene from geranylgeranyl diphosphate: step 1/1. Functionally, catalyzes the reaction from prephytoene diphosphate to phytoene. This chain is Phytoene synthase (crtB), found in Arthrospira platensis (Spirulina platensis).